The sequence spans 341 residues: HTH-type transcriptional repressor PurR (341 aa).

Positions 2 to 56 (ATIKDVAKRANVSTTTVSHVINKTRFVAEETRNAVWAAIKELHYSPSAVARSLKV) constitute an HTH lacI-type domain. Positions 4 to 23 (IKDVAKRANVSTTTVSHVIN) form a DNA-binding region, H-T-H motif. The DNA-binding element occupies 48–56 (SAVARSLKV). Hypoxanthine-binding residues include Tyr73, Arg190, Thr192, Phe221, and Asp275.

In terms of assembly, homodimer.

It participates in purine metabolism; purine nucleotide biosynthesis [regulation]. Functionally, is the main repressor of the genes involved in the de novo synthesis of purine nucleotides, regulating purB, purC, purEK, purF, purHD, purL, purMN and guaBA expression. PurR is allosterically activated to bind its cognate DNA by binding the purine corepressors, hypoxanthine or guanine, thereby effecting transcription repression. This chain is HTH-type transcriptional repressor PurR, found in Escherichia coli (strain UTI89 / UPEC).